Here is a 259-residue protein sequence, read N- to C-terminus: Protein SODIUM POTASSIUM ROOT DEFECTIVE 2 (259 aa).

The tract at residues 141–165 (PDSITGSVDQDPAKTVEAEAPAGED) is disordered. Positions 151–165 (DPAKTVEAEAPAGED) are enriched in basic and acidic residues. An HMA domain is found at 180–246 (QQVVVLKVSL…KVKNAQFWTN (67 aa)). Residues cysteine 191 and cysteine 194 each contribute to the a metal cation site.

This chain is Protein SODIUM POTASSIUM ROOT DEFECTIVE 2, found in Arabidopsis thaliana (Mouse-ear cress).